Reading from the N-terminus, the 237-residue chain is Corrinoid adenosyltransferase MMAB (237 aa).

A mitochondrion-targeting transit peptide spans 1–26 (MAVWLFGGRLGLRGRLSACRLLCPRF). The segment at 30–49 (GPQGGEDGDRLQPSSTAAKI) is disordered. ATP is bound by residues 54 to 57 (TKTG), 62 to 63 (SS), and K72. S128 is modified (phosphoserine). 184–188 (RRAER) lines the ATP pocket. At K205 the chain carries N6-succinyllysine. N208 lines the ATP pocket. N6-acetyllysine; alternate is present on K224. Residue K224 is modified to N6-succinyllysine; alternate.

It belongs to the Cob(I)alamin adenosyltransferase family. As to quaternary structure, homotrimer.

Its subcellular location is the mitochondrion. It carries out the reaction cob(I)alamin-[corrinoid adenosyltransferase] + ATP = apo-[corrinoid adenosyltransferase] + adenosylcob(III)alamin + triphosphate. Functionally, converts cob(I)alamin to adenosylcobalamin (adenosylcob(III)alamin), a coenzyme for methylmalonyl-CoA mutase, therefore participates in the final step of the vitamin B12 conversion. Generates adenosylcobalamin (AdoCbl) and directly delivers the cofactor to MUT in a transfer that is stimulated by ATP-binding to MMAB and gated by MMAA. The sequence is that of Corrinoid adenosyltransferase MMAB from Mus musculus (Mouse).